The following is a 201-amino-acid chain: Glycine-rich protein 23 (201 aa).

An N-terminal signal peptide occupies residues methionine 1 to glycine 24. A run of 21 repeats spans residues glycine 62–glycine 67, glycine 68–glycine 73, glycine 74–glycine 79, glycine 80–glycine 85, glycine 86–glycine 91, glycine 92–glycine 97, glycine 98–serine 103, glycine 104–glycine 109, glycine 110–serine 115, glycine 116–glycine 121, glycine 122–glycine 129, glycine 130–glycine 135, glycine 136–glycine 143, glycine 144–glycine 151, glycine 152–glycine 157, glycine 158–glycine 163, glycine 164–glycine 169, glycine 170–glycine 175, glycine 176–glycine 182, glycine 184–glycine 189, and glycine 190–glycine 194. The tract at residues glycine 62–glycine 194 is 21 X 6 AA approximate tandem repeats of G-L-G-G-G-G, Gly-rich.

This chain is Glycine-rich protein 23, found in Arabidopsis thaliana (Mouse-ear cress).